Consider the following 134-residue polypeptide: UPF0412 protein YaaI (134 aa).

Residues 1 to 23 (MKSVFTLSASLAISLLLCCTAQA) form the signal peptide.

This sequence belongs to the UPF0412 family.

This is UPF0412 protein YaaI from Escherichia coli O7:K1 (strain IAI39 / ExPEC).